The sequence spans 341 residues: Farnesyl pyrophosphate synthase (341 aa).

The isopentenyl diphosphate site is built by Lys48, Arg51, and Gln86. Mg(2+) contacts are provided by Asp93 and Asp97. Residue Arg102 participates in dimethylallyl diphosphate binding. Residue Arg103 participates in isopentenyl diphosphate binding. 4 residues coordinate dimethylallyl diphosphate: Lys190, Thr191, Gln229, and Lys246.

Belongs to the FPP/GGPP synthase family. It depends on Mg(2+) as a cofactor.

The protein resides in the cytoplasm. The catalysed reaction is isopentenyl diphosphate + dimethylallyl diphosphate = (2E)-geranyl diphosphate + diphosphate. It catalyses the reaction isopentenyl diphosphate + (2E)-geranyl diphosphate = (2E,6E)-farnesyl diphosphate + diphosphate. The protein operates within isoprenoid biosynthesis; farnesyl diphosphate biosynthesis; farnesyl diphosphate from geranyl diphosphate and isopentenyl diphosphate: step 1/1. Its pathway is isoprenoid biosynthesis; geranyl diphosphate biosynthesis; geranyl diphosphate from dimethylallyl diphosphate and isopentenyl diphosphate: step 1/1. Functionally, catalyzes the sequential condensation of isopentenyl pyrophosphate with the allylic pyrophosphates, dimethylallyl pyrophosphate, and then with the resultant geranylpyrophosphate to the ultimate product farnesyl pyrophosphate. The sequence is that of Farnesyl pyrophosphate synthase (FPS1) from Helianthus annuus (Common sunflower).